The primary structure comprises 825 residues: Probable inorganic carbon transporter subunit DabA (825 aa).

Cys-334, Asp-336, His-521, and Cys-536 together coordinate Zn(2+).

Belongs to the inorganic carbon transporter (TC 9.A.2) DabA family. As to quaternary structure, forms a complex with DabB. Zn(2+) is required as a cofactor.

The protein resides in the cell inner membrane. Functionally, part of an energy-coupled inorganic carbon pump. The chain is Probable inorganic carbon transporter subunit DabA from Acidithiobacillus ferrooxidans (strain ATCC 23270 / DSM 14882 / CIP 104768 / NCIMB 8455) (Ferrobacillus ferrooxidans (strain ATCC 23270)).